We begin with the raw amino-acid sequence, 197 residues long: Proteinase inhibitor type-2 (197 aa).

The signal sequence occupies residues 1–24; sequence MAVHKVSFVAHLLVLGMFLLLVDA. A run of 3 repeats spans residues 24–80, 81–140, and 141–196. Cystine bridges form between Cys27–Cys115, Cys31–Cys111, Cys39–Cys121, Cys51–Cys88, Cys54–Cys72, Cys55–Cys84, Cys61–Cys97, and Cys114–Cys132.

The protein belongs to the protease inhibitor I20 (potato type II proteinase inhibitor) family.

This is Proteinase inhibitor type-2 from Nicotiana tabacum (Common tobacco).